The sequence spans 61 residues: Large ribosomal subunit protein uL30 (61 aa).

Belongs to the universal ribosomal protein uL30 family. Part of the 50S ribosomal subunit.

The protein is Large ribosomal subunit protein uL30 of Thermosipho africanus (strain TCF52B).